The chain runs to 435 residues: GTPase Obg (435 aa).

Residues 1–159 (MAFIDKCKIV…VEVLLELKTI (159 aa)) form the Obg domain. The region spanning 160–329 (ADIGIIGLPN…MLDDVIKIYF (170 aa)) is the OBG-type G domain. Residues 166–173 (GLPNAGKS), 191–195 (FTTLN), 212–215 (DIPG), 282–285 (NKID), and 310–312 (SAL) contribute to the GTP site. Mg(2+) is bound by residues serine 173 and threonine 193. An OCT domain is found at 357 to 435 (KSKELDKTIE…IYDITLEFEE (79 aa)).

Belongs to the TRAFAC class OBG-HflX-like GTPase superfamily. OBG GTPase family. In terms of assembly, monomer. Mg(2+) serves as cofactor.

It is found in the cytoplasm. An essential GTPase which binds GTP, GDP and possibly (p)ppGpp with moderate affinity, with high nucleotide exchange rates and a fairly low GTP hydrolysis rate. Plays a role in control of the cell cycle, stress response, ribosome biogenesis and in those bacteria that undergo differentiation, in morphogenesis control. This is GTPase Obg from Ureaplasma parvum serovar 3 (strain ATCC 27815 / 27 / NCTC 11736).